The sequence spans 102 residues: ATP-dependent Clp protease adapter protein ClpS (102 aa).

Over residues 1 to 18 (MSQFDHQHLSDTEEKQEL) the composition is skewed to basic and acidic residues. Positions 1 to 21 (MSQFDHQHLSDTEEKQELKPP) are disordered.

It belongs to the ClpS family. Binds to the N-terminal domain of the chaperone ClpA.

Involved in the modulation of the specificity of the ClpAP-mediated ATP-dependent protein degradation. In Idiomarina loihiensis (strain ATCC BAA-735 / DSM 15497 / L2-TR), this protein is ATP-dependent Clp protease adapter protein ClpS.